Consider the following 326-residue polypeptide: Flavanone 3-dioxygenase 3 (326 aa).

The span at 1-15 shows a compositional bias: polar residues; the sequence is MSDTSKGIPQEQLPS. Residues 1–21 form a disordered region; it reads MSDTSKGIPQEQLPSQELHPP. Residues 175 to 276 form the Fe2OG dioxygenase domain; sequence EGLQLLSVNC…RISLASIHGF (102 aa). 3 residues coordinate Fe cation: histidine 200, aspartate 202, and histidine 257. Arginine 267 is a 2-oxoglutarate binding site.

It belongs to the iron/ascorbate-dependent oxidoreductase family. The cofactor is Fe(2+). It depends on L-ascorbate as a cofactor. Expressed at very low levels in roots, leaves, stems and seeds.

The enzyme catalyses a (2S)-flavan-4-one + 2-oxoglutarate + O2 = a (2R,3R)-dihydroflavonol + succinate + CO2. It participates in secondary metabolite biosynthesis; flavonoid biosynthesis. Its function is as follows. Catalyzes the 3-beta-hydroxylation of 2S-flavanones to 2R,3R-dihydroflavonols which are intermediates in the biosynthesis of flavonols, anthocyanidins, catechins and proanthocyanidins in plants. Converts (2S)-eriodictyol to (+)-taxifolin and (2S)-naringenin to (+)-(2R/3R)-dihydrokaempferol in vitro. This chain is Flavanone 3-dioxygenase 3, found in Oryza sativa subsp. japonica (Rice).